The primary structure comprises 609 residues: Granule-bound starch synthase 1, chloroplastic/amyloplastic (609 aa).

A chloroplast-targeting transit peptide spans 1-77 (MSALTTSQLA…SRRFPSVVVY (77 aa)). Positions 29 to 67 (RHGFQGLKPRSPAGGDATSLSVTTSARATPKQQRSVQRG) are disordered. Over residues 46–66 (TSLSVTTSARATPKQQRSVQR) the composition is skewed to polar residues. Lys-97 is an ADP-alpha-D-glucose binding site. 5 residues coordinate ADP: Gly-100, Arg-408, Lys-413, Lys-462, and Gln-493. Cys-337 and Cys-529 are oxidised to a cystine.

It belongs to the glycosyltransferase 1 family. Bacterial/plant glycogen synthase subfamily.

The protein resides in the plastid. It is found in the chloroplast. It localises to the amyloplast. It catalyses the reaction an NDP-alpha-D-glucose + [(1-&gt;4)-alpha-D-glucosyl](n) = [(1-&gt;4)-alpha-D-glucosyl](n+1) + a ribonucleoside 5'-diphosphate + H(+). It functions in the pathway glycan biosynthesis; starch biosynthesis. Functionally, required for the synthesis of amylose in endosperm. This chain is Granule-bound starch synthase 1, chloroplastic/amyloplastic (WAXY), found in Oryza sativa subsp. indica (Rice).